The primary structure comprises 249 residues: tRNA pseudouridine synthase A (249 aa).

D52 serves as the catalytic Nucleophile. Position 111 (Y111) interacts with substrate.

The protein belongs to the tRNA pseudouridine synthase TruA family. As to quaternary structure, homodimer.

It catalyses the reaction uridine(38/39/40) in tRNA = pseudouridine(38/39/40) in tRNA. Formation of pseudouridine at positions 38, 39 and 40 in the anticodon stem and loop of transfer RNAs. The sequence is that of tRNA pseudouridine synthase A from Caulobacter sp. (strain K31).